The following is a 256-amino-acid chain: Thiazole synthase (256 aa).

K96 acts as the Schiff-base intermediate with DXP in catalysis. Residues G157, 183–184, and 205–206 contribute to the 1-deoxy-D-xylulose 5-phosphate site; these read AG and NT.

This sequence belongs to the ThiG family. In terms of assembly, homotetramer. Forms heterodimers with either ThiH or ThiS.

The protein localises to the cytoplasm. The catalysed reaction is [ThiS sulfur-carrier protein]-C-terminal-Gly-aminoethanethioate + 2-iminoacetate + 1-deoxy-D-xylulose 5-phosphate = [ThiS sulfur-carrier protein]-C-terminal Gly-Gly + 2-[(2R,5Z)-2-carboxy-4-methylthiazol-5(2H)-ylidene]ethyl phosphate + 2 H2O + H(+). It participates in cofactor biosynthesis; thiamine diphosphate biosynthesis. Functionally, catalyzes the rearrangement of 1-deoxy-D-xylulose 5-phosphate (DXP) to produce the thiazole phosphate moiety of thiamine. Sulfur is provided by the thiocarboxylate moiety of the carrier protein ThiS. In vitro, sulfur can be provided by H(2)S. The polypeptide is Thiazole synthase (Bacillus cereus (strain AH187)).